The primary structure comprises 502 residues: Lanosterol 14-alpha demethylase (502 aa).

The chain crosses the membrane as a helical span at residues 22-42; that stretch reads GNLASMLLIACAFTLSLVYLF. A heme-binding site is contributed by Cys448.

The protein belongs to the cytochrome P450 family. The cofactor is heme. Ubiquitinated by MARCHF6, leading to proteasomal degradation.

It is found in the endoplasmic reticulum membrane. The protein resides in the microsome membrane. It catalyses the reaction a 14alpha-methyl steroid + 3 reduced [NADPH--hemoprotein reductase] + 3 O2 = a Delta(14) steroid + formate + 3 oxidized [NADPH--hemoprotein reductase] + 4 H2O + 4 H(+). The catalysed reaction is lanosterol + 3 reduced [NADPH--hemoprotein reductase] + 3 O2 = 4,4-dimethyl-5alpha-cholesta-8,14,24-trien-3beta-ol + formate + 3 oxidized [NADPH--hemoprotein reductase] + 4 H2O + 4 H(+). The enzyme catalyses 24,25-dihydrolanosterol + 3 reduced [NADPH--hemoprotein reductase] + 3 O2 = 4,4-dimethyl-8,14-cholestadien-3beta-ol + formate + 3 oxidized [NADPH--hemoprotein reductase] + 4 H2O + 4 H(+). It carries out the reaction a 14alpha-methyl steroid + reduced [NADPH--hemoprotein reductase] + O2 = a 14alpha-hydroxymethyl steroid + oxidized [NADPH--hemoprotein reductase] + H2O + H(+). It catalyses the reaction a 14alpha-hydroxymethyl steroid + reduced [NADPH--hemoprotein reductase] + O2 = a 14alpha-formyl steroid + oxidized [NADPH--hemoprotein reductase] + 2 H2O + H(+). The catalysed reaction is a 14alpha-formyl steroid + reduced [NADPH--hemoprotein reductase] + O2 = a Delta(14) steroid + formate + oxidized [NADPH--hemoprotein reductase] + H2O + 2 H(+). The enzyme catalyses lanosterol + reduced [NADPH--hemoprotein reductase] + O2 = 32-hydroxylanosterol + oxidized [NADPH--hemoprotein reductase] + H2O + H(+). It carries out the reaction 32-hydroxylanosterol + reduced [NADPH--hemoprotein reductase] + O2 = 32-oxolanosterol + oxidized [NADPH--hemoprotein reductase] + 2 H2O + H(+). It catalyses the reaction 32-oxolanosterol + reduced [NADPH--hemoprotein reductase] + O2 = 4,4-dimethyl-5alpha-cholesta-8,14,24-trien-3beta-ol + formate + oxidized [NADPH--hemoprotein reductase] + H2O + 2 H(+). The catalysed reaction is 24,25-dihydrolanosterol + reduced [NADPH--hemoprotein reductase] + O2 = 32-hydroxy-24,25-dihydrolanosterol + oxidized [NADPH--hemoprotein reductase] + H2O + H(+). The enzyme catalyses 32-hydroxy-24,25-dihydrolanosterol + reduced [NADPH--hemoprotein reductase] + O2 = 32-oxo-24,25-dihydrolanosterol + oxidized [NADPH--hemoprotein reductase] + 2 H2O + H(+). It carries out the reaction 32-oxo-24,25-dihydrolanosterol + reduced [NADPH--hemoprotein reductase] + O2 = 4,4-dimethyl-8,14-cholestadien-3beta-ol + formate + oxidized [NADPH--hemoprotein reductase] + H2O + 2 H(+). The protein operates within steroid biosynthesis; zymosterol biosynthesis; zymosterol from lanosterol: step 1/6. With respect to regulation, inhibited by azalanstat. Inhibited by azole antifungal agents ketoconazole, itraconazole and fluconazole. Functionally, sterol 14alpha-demethylase that plays a critical role in the cholesterol biosynthesis pathway, being cholesterol the major sterol component in mammalian membranes as well as a precursor for bile acid and steroid hormone synthesis. Cytochrome P450 monooxygenase that catalyzes the three-step oxidative removal of the 14alpha-methyl group (C-32) of sterols such as lanosterol (lanosta-8,24-dien-3beta-ol) and 24,25-dihydrolanosterol (DHL) in the form of formate, and converts the sterols to 4,4-dimethyl-5alpha-cholesta-8,14,24-trien-3beta-ol and 4,4-dimethyl-8,14-cholestadien-3beta-ol, respectively, which are intermediates of cholesterol biosynthesis. Can also demethylate substrates not intrinsic to mammals, such as eburicol (24-methylene-24,25-dihydrolanosterol), but at a lower rate than DHL. The chain is Lanosterol 14-alpha demethylase from Bos taurus (Bovine).